Here is a 435-residue protein sequence, read N- to C-terminus: ATP-dependent RNA helicase RhlB (435 aa).

A Q motif motif is present at residues 9–37 (QKFADFSLQTEIKTALNESGFEYCTPIQA). Residues 40–219 (LPILLQKKDI…YDHMNEPEKV (180 aa)) enclose the Helicase ATP-binding domain. 53-60 (AQTGTGKT) contributes to the ATP binding site. Residues 165-168 (DEAD) carry the DEAD box motif. One can recognise a Helicase C-terminal domain in the interval 243-390 (KMRLLLTLLE…VTNYDSEALL (148 aa)). A disordered region spans residues 395-435 (APVRVHRKHNSRPQGRSGSGGKPRSGNRNAPRRHDKTRRHS). Over residues 424 to 435 (APRRHDKTRRHS) the composition is skewed to basic residues.

This sequence belongs to the DEAD box helicase family. RhlB subfamily. Component of the RNA degradosome, which is a multiprotein complex involved in RNA processing and mRNA degradation.

The protein resides in the cytoplasm. The catalysed reaction is ATP + H2O = ADP + phosphate + H(+). Functionally, DEAD-box RNA helicase involved in RNA degradation. Has RNA-dependent ATPase activity and unwinds double-stranded RNA. The polypeptide is ATP-dependent RNA helicase RhlB (Shewanella sediminis (strain HAW-EB3)).